A 97-amino-acid chain; its full sequence is Large ribosomal subunit protein eL21 (97 aa).

The disordered stretch occupies residues 1–26; that stretch reads MQKSEGFRSKTRYKLQKHPRQKGMAP. Residues 9-21 are compositionally biased toward basic residues; the sequence is SKTRYKLQKHPRQ.

Belongs to the eukaryotic ribosomal protein eL21 family.

This chain is Large ribosomal subunit protein eL21, found in Methanococcus maripaludis (strain C6 / ATCC BAA-1332).